The following is an 81-amino-acid chain: Small ribosomal subunit protein bS16 (81 aa).

This sequence belongs to the bacterial ribosomal protein bS16 family.

The chain is Small ribosomal subunit protein bS16 from Neisseria meningitidis serogroup C (strain 053442).